Reading from the N-terminus, the 100-residue chain is MKHLLIVSLVFVTIIWKIECETDMYDDSSIVKTEETEEVKPCGLNEVWMVCSSCEEECGKTPQPCPRICQPARCQCPAHKGYRRDGQGNCIFCHDSVPKL.

An N-terminal signal peptide occupies residues 1–20 (MKHLLIVSLVFVTIIWKIEC). 5 disulfide bridges follow: Cys-42/Cys-74, Cys-51/Cys-69, Cys-54/Cys-65, Cys-58/Cys-93, and Cys-76/Cys-90. A TIL domain is found at 42–93 (CGLNEVWMVCSSCEEECGKTPQPCPRICQPARCQCPAHKGYRRDGQGNCIFC).

The protein localises to the secreted. This is Serine protease inhibitor 1 protein from Caenorhabditis elegans.